Consider the following 456-residue polypeptide: Bifunctional protein GlmU (456 aa).

Positions 1–229 (MLNNAMSVVI…LSEVEGVNNR (229 aa)) are pyrophosphorylase. UDP-N-acetyl-alpha-D-glucosamine-binding positions include 11-14 (LAAG), Lys25, Gln76, 81-82 (GT), 103-105 (YGD), Gly140, Glu154, Asn169, and Asn227. Asp105 lines the Mg(2+) pocket. A Mg(2+)-binding site is contributed by Asn227. Positions 230 to 250 (LQLSRLERVYQSEQAEKLLLA) are linker. The interval 251–456 (GVMLRDPARF…EGWRRPVKKK (206 aa)) is N-acetyltransferase. UDP-N-acetyl-alpha-D-glucosamine is bound by residues Arg333 and Lys351. Catalysis depends on His363, which acts as the Proton acceptor. The UDP-N-acetyl-alpha-D-glucosamine site is built by Tyr366 and Asn377. Residues Ala380, 386-387 (NY), Ser405, Ala423, and Arg440 each bind acetyl-CoA.

It in the N-terminal section; belongs to the N-acetylglucosamine-1-phosphate uridyltransferase family. The protein in the C-terminal section; belongs to the transferase hexapeptide repeat family. As to quaternary structure, homotrimer. The cofactor is Mg(2+).

The protein resides in the cytoplasm. It carries out the reaction alpha-D-glucosamine 1-phosphate + acetyl-CoA = N-acetyl-alpha-D-glucosamine 1-phosphate + CoA + H(+). The enzyme catalyses N-acetyl-alpha-D-glucosamine 1-phosphate + UTP + H(+) = UDP-N-acetyl-alpha-D-glucosamine + diphosphate. The protein operates within nucleotide-sugar biosynthesis; UDP-N-acetyl-alpha-D-glucosamine biosynthesis; N-acetyl-alpha-D-glucosamine 1-phosphate from alpha-D-glucosamine 6-phosphate (route II): step 2/2. Its pathway is nucleotide-sugar biosynthesis; UDP-N-acetyl-alpha-D-glucosamine biosynthesis; UDP-N-acetyl-alpha-D-glucosamine from N-acetyl-alpha-D-glucosamine 1-phosphate: step 1/1. It functions in the pathway bacterial outer membrane biogenesis; LPS lipid A biosynthesis. In terms of biological role, catalyzes the last two sequential reactions in the de novo biosynthetic pathway for UDP-N-acetylglucosamine (UDP-GlcNAc). The C-terminal domain catalyzes the transfer of acetyl group from acetyl coenzyme A to glucosamine-1-phosphate (GlcN-1-P) to produce N-acetylglucosamine-1-phosphate (GlcNAc-1-P), which is converted into UDP-GlcNAc by the transfer of uridine 5-monophosphate (from uridine 5-triphosphate), a reaction catalyzed by the N-terminal domain. This Escherichia coli O81 (strain ED1a) protein is Bifunctional protein GlmU.